A 218-amino-acid polypeptide reads, in one-letter code: Pyridoxine/pyridoxamine 5'-phosphate oxidase (218 aa).

Residues 14 to 17 (RREY) and Lys72 contribute to the substrate site. FMN-binding positions include 67–72 (RIVLLK), 82–83 (YT), Arg88, Lys89, and Gln111. The substrate site is built by Tyr129, Arg133, and Ser137. FMN contacts are provided by residues 146 to 147 (QS) and Trp191. 197–199 (RLH) contacts substrate. Residue Arg201 coordinates FMN.

It belongs to the pyridoxamine 5'-phosphate oxidase family. As to quaternary structure, homodimer. FMN is required as a cofactor.

It carries out the reaction pyridoxamine 5'-phosphate + O2 + H2O = pyridoxal 5'-phosphate + H2O2 + NH4(+). The catalysed reaction is pyridoxine 5'-phosphate + O2 = pyridoxal 5'-phosphate + H2O2. It functions in the pathway cofactor metabolism; pyridoxal 5'-phosphate salvage; pyridoxal 5'-phosphate from pyridoxamine 5'-phosphate: step 1/1. It participates in cofactor metabolism; pyridoxal 5'-phosphate salvage; pyridoxal 5'-phosphate from pyridoxine 5'-phosphate: step 1/1. Its function is as follows. Catalyzes the oxidation of either pyridoxine 5'-phosphate (PNP) or pyridoxamine 5'-phosphate (PMP) into pyridoxal 5'-phosphate (PLP). The polypeptide is Pyridoxine/pyridoxamine 5'-phosphate oxidase (Escherichia fergusonii (strain ATCC 35469 / DSM 13698 / CCUG 18766 / IAM 14443 / JCM 21226 / LMG 7866 / NBRC 102419 / NCTC 12128 / CDC 0568-73)).